The chain runs to 430 residues: Signal recognition particle protein (430 aa).

Residues 105 to 112 (GLQGSGKT), 187 to 191 (DTAGR), and 245 to 248 (TKLD) each bind GTP.

It belongs to the GTP-binding SRP family. SRP54 subfamily. Part of the signal recognition particle protein translocation system, which is composed of SRP and FtsY.

It localises to the cytoplasm. The catalysed reaction is GTP + H2O = GDP + phosphate + H(+). Its function is as follows. Involved in targeting and insertion of nascent membrane proteins into the cytoplasmic membrane. Binds to the hydrophobic signal sequence of the ribosome-nascent chain (RNC) as it emerges from the ribosomes. The SRP-RNC complex is then targeted to the cytoplasmic membrane where it interacts with the SRP receptor FtsY. The chain is Signal recognition particle protein from Thermus aquaticus.